The following is a 273-amino-acid chain: Phosphate import ATP-binding protein PstB (273 aa).

The ABC transporter domain occupies leucine 17–proline 259. Glycine 49–serine 56 lines the ATP pocket.

This sequence belongs to the ABC transporter superfamily. Phosphate importer (TC 3.A.1.7) family. The complex is composed of two ATP-binding proteins (PstB), two transmembrane proteins (PstC and PstA) and a solute-binding protein (PstS).

The protein localises to the cell inner membrane. It catalyses the reaction phosphate(out) + ATP + H2O = ADP + 2 phosphate(in) + H(+). Functionally, part of the ABC transporter complex PstSACB involved in phosphate import. Responsible for energy coupling to the transport system. In Trichodesmium erythraeum (strain IMS101), this protein is Phosphate import ATP-binding protein PstB.